Reading from the N-terminus, the 273-residue chain is Putative pyruvate, phosphate dikinase regulatory protein (273 aa).

149–156 (GPSRTSKT) provides a ligand contact to ADP.

It belongs to the pyruvate, phosphate/water dikinase regulatory protein family. PDRP subfamily.

The catalysed reaction is N(tele)-phospho-L-histidyl/L-threonyl-[pyruvate, phosphate dikinase] + ADP = N(tele)-phospho-L-histidyl/O-phospho-L-threonyl-[pyruvate, phosphate dikinase] + AMP + H(+). It carries out the reaction N(tele)-phospho-L-histidyl/O-phospho-L-threonyl-[pyruvate, phosphate dikinase] + phosphate + H(+) = N(tele)-phospho-L-histidyl/L-threonyl-[pyruvate, phosphate dikinase] + diphosphate. Functionally, bifunctional serine/threonine kinase and phosphorylase involved in the regulation of the pyruvate, phosphate dikinase (PPDK) by catalyzing its phosphorylation/dephosphorylation. The protein is Putative pyruvate, phosphate dikinase regulatory protein of Rickettsia conorii (strain ATCC VR-613 / Malish 7).